Reading from the N-terminus, the 35-residue chain is Photosystem II reaction center protein T (35 aa).

Residues 3 to 23 (ALVYTFLLVSTLGIIFFAIFF) form a helical membrane-spanning segment.

This sequence belongs to the PsbT family. As to quaternary structure, PSII is composed of 1 copy each of membrane proteins PsbA, PsbB, PsbC, PsbD, PsbE, PsbF, PsbH, PsbI, PsbJ, PsbK, PsbL, PsbM, PsbT, PsbY, PsbZ, Psb30/Ycf12, at least 3 peripheral proteins of the oxygen-evolving complex and a large number of cofactors. It forms dimeric complexes.

The protein localises to the plastid. It is found in the chloroplast thylakoid membrane. Found at the monomer-monomer interface of the photosystem II (PS II) dimer, plays a role in assembly and dimerization of PSII. PSII is a light-driven water plastoquinone oxidoreductase, using light energy to abstract electrons from H(2)O, generating a proton gradient subsequently used for ATP formation. The protein is Photosystem II reaction center protein T of Ceratophyllum demersum (Rigid hornwort).